The primary structure comprises 246 residues: 5-oxoprolinase subunit A (246 aa).

This sequence belongs to the LamB/PxpA family. Forms a complex composed of PxpA, PxpB and PxpC.

It catalyses the reaction 5-oxo-L-proline + ATP + 2 H2O = L-glutamate + ADP + phosphate + H(+). Catalyzes the cleavage of 5-oxoproline to form L-glutamate coupled to the hydrolysis of ATP to ADP and inorganic phosphate. This is 5-oxoprolinase subunit A from Cupriavidus necator (strain ATCC 17699 / DSM 428 / KCTC 22496 / NCIMB 10442 / H16 / Stanier 337) (Ralstonia eutropha).